A 205-amino-acid chain; its full sequence is Ribosomal RNA small subunit methyltransferase G (205 aa).

S-adenosyl-L-methionine is bound by residues G73, L78, 124–125, and R138; that span reads VE.

Belongs to the methyltransferase superfamily. RNA methyltransferase RsmG family.

The protein localises to the cytoplasm. It catalyses the reaction guanosine(527) in 16S rRNA + S-adenosyl-L-methionine = N(7)-methylguanosine(527) in 16S rRNA + S-adenosyl-L-homocysteine. In terms of biological role, specifically methylates the N7 position of guanine in position 527 of 16S rRNA. This is Ribosomal RNA small subunit methyltransferase G from Actinobacillus pleuropneumoniae serotype 5b (strain L20).